A 344-amino-acid polypeptide reads, in one-letter code: Glycerol-3-phosphate dehydrogenase [NAD(P)+] (344 aa).

The NADPH site is built by serine 18, tyrosine 19, histidine 39, and lysine 113. Sn-glycerol 3-phosphate is bound by residues lysine 113, glycine 142, and threonine 144. An NADPH-binding site is contributed by alanine 146. Lysine 198, aspartate 251, serine 261, arginine 262, and asparagine 263 together coordinate sn-glycerol 3-phosphate. Catalysis depends on lysine 198, which acts as the Proton acceptor. Position 262 (arginine 262) interacts with NADPH. Residues isoleucine 286 and glutamate 288 each contribute to the NADPH site.

The protein belongs to the NAD-dependent glycerol-3-phosphate dehydrogenase family.

The protein resides in the cytoplasm. The enzyme catalyses sn-glycerol 3-phosphate + NAD(+) = dihydroxyacetone phosphate + NADH + H(+). It carries out the reaction sn-glycerol 3-phosphate + NADP(+) = dihydroxyacetone phosphate + NADPH + H(+). The protein operates within membrane lipid metabolism; glycerophospholipid metabolism. Catalyzes the reduction of the glycolytic intermediate dihydroxyacetone phosphate (DHAP) to sn-glycerol 3-phosphate (G3P), the key precursor for phospholipid synthesis. This Blochmanniella pennsylvanica (strain BPEN) protein is Glycerol-3-phosphate dehydrogenase [NAD(P)+].